The following is a 507-amino-acid chain: Histidine ammonia-lyase (507 aa).

Positions 143–145 form a cross-link, 5-imidazolinone (Ser-Gly); it reads SSG. Residue Ser-144 is modified to 2,3-didehydroalanine (Ser).

The protein belongs to the PAL/histidase family. Contains an active site 4-methylidene-imidazol-5-one (MIO), which is formed autocatalytically by cyclization and dehydration of residues Ser-Ser-Gly.

Its subcellular location is the cytoplasm. The enzyme catalyses L-histidine = trans-urocanate + NH4(+). It participates in amino-acid degradation; L-histidine degradation into L-glutamate; N-formimidoyl-L-glutamate from L-histidine: step 1/3. In Alkaliphilus metalliredigens (strain QYMF), this protein is Histidine ammonia-lyase.